Reading from the N-terminus, the 545-residue chain is CTP synthase (545 aa).

The amidoligase domain stretch occupies residues 1-266 (MTTNYIFVTG…DDYICKRFSL (266 aa)). Ser14 contributes to the CTP binding site. Ser14 contributes to the UTP binding site. ATP contacts are provided by residues 15-20 (SLGKGI) and Asp72. Residues Asp72 and Glu140 each coordinate Mg(2+). CTP contacts are provided by residues 147–149 (DIE), 187–192 (KTKPTQ), and Lys223. Residues 187 to 192 (KTKPTQ) and Lys223 each bind UTP. 239-241 (KDV) is a binding site for ATP. In terms of domain architecture, Glutamine amidotransferase type-1 spans 291–542 (TIGMVGKYIE…VKAASEYQKR (252 aa)). Gly352 contacts L-glutamine. The active-site Nucleophile; for glutamine hydrolysis is Cys379. Residues 380 to 383 (LGMQ), Glu403, and Arg470 each bind L-glutamine. Catalysis depends on residues His515 and Glu517.

The protein belongs to the CTP synthase family. In terms of assembly, homotetramer.

It catalyses the reaction UTP + L-glutamine + ATP + H2O = CTP + L-glutamate + ADP + phosphate + 2 H(+). The catalysed reaction is L-glutamine + H2O = L-glutamate + NH4(+). The enzyme catalyses UTP + NH4(+) + ATP = CTP + ADP + phosphate + 2 H(+). The protein operates within pyrimidine metabolism; CTP biosynthesis via de novo pathway; CTP from UDP: step 2/2. With respect to regulation, allosterically activated by GTP, when glutamine is the substrate; GTP has no effect on the reaction when ammonia is the substrate. The allosteric effector GTP functions by stabilizing the protein conformation that binds the tetrahedral intermediate(s) formed during glutamine hydrolysis. Inhibited by the product CTP, via allosteric rather than competitive inhibition. Functionally, catalyzes the ATP-dependent amination of UTP to CTP with either L-glutamine or ammonia as the source of nitrogen. Regulates intracellular CTP levels through interactions with the four ribonucleotide triphosphates. This Cronobacter sakazakii (strain ATCC BAA-894) (Enterobacter sakazakii) protein is CTP synthase.